Here is a 187-residue protein sequence, read N- to C-terminus: Probable nicotinate-nucleotide adenylyltransferase (187 aa).

The protein belongs to the NadD family.

It carries out the reaction nicotinate beta-D-ribonucleotide + ATP + H(+) = deamido-NAD(+) + diphosphate. It functions in the pathway cofactor biosynthesis; NAD(+) biosynthesis; deamido-NAD(+) from nicotinate D-ribonucleotide: step 1/1. Functionally, catalyzes the reversible adenylation of nicotinate mononucleotide (NaMN) to nicotinic acid adenine dinucleotide (NaAD). In Anaeromyxobacter sp. (strain K), this protein is Probable nicotinate-nucleotide adenylyltransferase.